Here is a 416-residue protein sequence, read N- to C-terminus: Putative L-glutamine:3-amino-2,3-dideoxy-scyllo-inosose aminotransferase (416 aa).

Lysine 199 carries the post-translational modification N6-(pyridoxal phosphate)lysine.

The protein belongs to the DegT/DnrJ/EryC1 family. L-glutamine:2-deoxy-scyllo-inosose/scyllo-inosose aminotransferase subfamily. It depends on pyridoxal 5'-phosphate as a cofactor.

It catalyses the reaction 3-amino-2,3-dideoxy-scyllo-inosose + L-glutamine = 2-deoxystreptamine + 2-oxoglutaramate. The protein operates within metabolic intermediate biosynthesis; 2-deoxystreptamine biosynthesis; 2-deoxystreptamine from D-glucose 6-phosphate: step 4/4. It functions in the pathway antibiotic biosynthesis; tobramycin biosynthesis. In terms of biological role, catalyzes the transamination of 3-amino-2,3-dideoxy-scyllo-inosose (amino-DOI) into 2-deoxystreptamine (DOS). This is Putative L-glutamine:3-amino-2,3-dideoxy-scyllo-inosose aminotransferase (tobS2) from Streptoalloteichus tenebrarius (strain ATCC 17920 / DSM 40477 / JCM 4838 / CBS 697.72 / NBRC 16177 / NCIMB 11028 / NRRL B-12390 / A12253. 1 / ISP 5477) (Streptomyces tenebrarius).